The following is a 276-amino-acid chain: Diaminopimelate epimerase (276 aa).

Positions 13, 46, and 66 each coordinate substrate. The active-site Proton donor is the C75. Residues 76-77 (GN), N159, N192, and 210-211 (ER) contribute to the substrate site. C219 serves as the catalytic Proton acceptor. A substrate-binding site is contributed by 220-221 (GT).

The protein belongs to the diaminopimelate epimerase family. As to quaternary structure, homodimer.

It localises to the cytoplasm. It catalyses the reaction (2S,6S)-2,6-diaminopimelate = meso-2,6-diaminopimelate. It participates in amino-acid biosynthesis; L-lysine biosynthesis via DAP pathway; DL-2,6-diaminopimelate from LL-2,6-diaminopimelate: step 1/1. Its function is as follows. Catalyzes the stereoinversion of LL-2,6-diaminopimelate (L,L-DAP) to meso-diaminopimelate (meso-DAP), a precursor of L-lysine and an essential component of the bacterial peptidoglycan. This chain is Diaminopimelate epimerase, found in Pseudomonas entomophila (strain L48).